The primary structure comprises 337 residues: tRNA N6-adenosine threonylcarbamoyltransferase (337 aa).

Residues His-111 and His-115 each coordinate Fe cation. Residues 134 to 138 (LVSGG), Asp-167, Gly-180, and Asn-272 each bind substrate. Residue Asp-300 coordinates Fe cation.

The protein belongs to the KAE1 / TsaD family. The cofactor is Fe(2+).

The protein localises to the cytoplasm. It catalyses the reaction L-threonylcarbamoyladenylate + adenosine(37) in tRNA = N(6)-L-threonylcarbamoyladenosine(37) in tRNA + AMP + H(+). In terms of biological role, required for the formation of a threonylcarbamoyl group on adenosine at position 37 (t(6)A37) in tRNAs that read codons beginning with adenine. Is involved in the transfer of the threonylcarbamoyl moiety of threonylcarbamoyl-AMP (TC-AMP) to the N6 group of A37, together with TsaE and TsaB. TsaD likely plays a direct catalytic role in this reaction. This is tRNA N6-adenosine threonylcarbamoyltransferase from Escherichia coli O157:H7.